A 523-amino-acid chain; its full sequence is Probable malate:quinone oxidoreductase 1 (523 aa).

Belongs to the MQO family. The cofactor is FAD.

The enzyme catalyses (S)-malate + a quinone = a quinol + oxaloacetate. It functions in the pathway carbohydrate metabolism; tricarboxylic acid cycle; oxaloacetate from (S)-malate (quinone route): step 1/1. The protein is Probable malate:quinone oxidoreductase 1 of Pseudomonas aeruginosa (strain ATCC 15692 / DSM 22644 / CIP 104116 / JCM 14847 / LMG 12228 / 1C / PRS 101 / PAO1).